The following is a 45-amino-acid chain: Photosystem II reaction center protein K (45 aa).

Positions Met-1–Ala-8 are excised as a propeptide. The chain crosses the membrane as a helical span at residues Leu-24–Phe-44.

The protein belongs to the PsbK family. PSII is composed of 1 copy each of membrane proteins PsbA, PsbB, PsbC, PsbD, PsbE, PsbF, PsbH, PsbI, PsbJ, PsbK, PsbL, PsbM, PsbT, PsbX, PsbY, PsbZ, Psb30/Ycf12, peripheral proteins PsbO, CyanoQ (PsbQ), PsbU, PsbV and a large number of cofactors. It forms dimeric complexes.

The protein localises to the cellular thylakoid membrane. Its function is as follows. One of the components of the core complex of photosystem II (PSII). PSII is a light-driven water:plastoquinone oxidoreductase that uses light energy to abstract electrons from H(2)O, generating O(2) and a proton gradient subsequently used for ATP formation. It consists of a core antenna complex that captures photons, and an electron transfer chain that converts photonic excitation into a charge separation. The chain is Photosystem II reaction center protein K from Crocosphaera subtropica (strain ATCC 51142 / BH68) (Cyanothece sp. (strain ATCC 51142)).